A 288-amino-acid polypeptide reads, in one-letter code: 33 kDa chaperonin (288 aa).

Intrachain disulfides connect Cys-233–Cys-235 and Cys-267–Cys-270.

The protein belongs to the HSP33 family. Under oxidizing conditions two disulfide bonds are formed involving the reactive cysteines. Under reducing conditions zinc is bound to the reactive cysteines and the protein is inactive.

Its subcellular location is the cytoplasm. In terms of biological role, redox regulated molecular chaperone. Protects both thermally unfolding and oxidatively damaged proteins from irreversible aggregation. Plays an important role in the bacterial defense system toward oxidative stress. The protein is 33 kDa chaperonin of Pasteurella multocida (strain Pm70).